Here is a 187-residue protein sequence, read N- to C-terminus: Basic helix-loop-helix transcription factor scleraxis (187 aa).

2 disordered regions span residues 21–83 (LSED…TNSV) and 140–163 (AFFHHGGGGGSPPPRDSENSQPKQ). The span at 34–43 (SDEKPFHLDA) shows a compositional bias: basic and acidic residues. A compositionally biased stretch (basic residues) spans 50–72 (AGKRRSGKKAGRLHREPRQRHTA). Residues 67 to 119 (RQRHTANARERDRTNSVNTAFTALRTLIPTEPADRKLSKIETLRLASSYISHL) enclose the bHLH domain.

In terms of assembly, efficient DNA binding requires dimerization with another bHLH protein. Dimerizes and binds the E-box consensus sequence with E12. As to expression, expressed in the intersomitic, the superficial proximomedial limb mesenchyme and the subectodermal mesenchyme.

The protein localises to the nucleus. In terms of biological role, plays an early essential role in mesoderm formation, as well as a later role in formation of somite-derived chondrogenic lineages. The sequence is that of Basic helix-loop-helix transcription factor scleraxis (SCX) from Gallus gallus (Chicken).